The chain runs to 166 residues: Large ribosomal subunit protein uL10 (166 aa).

This sequence belongs to the universal ribosomal protein uL10 family. As to quaternary structure, part of the ribosomal stalk of the 50S ribosomal subunit. The N-terminus interacts with L11 and the large rRNA to form the base of the stalk. The C-terminus forms an elongated spine to which L12 dimers bind in a sequential fashion forming a multimeric L10(L12)X complex.

Functionally, forms part of the ribosomal stalk, playing a central role in the interaction of the ribosome with GTP-bound translation factors. The polypeptide is Large ribosomal subunit protein uL10 (Bacillus licheniformis (strain ATCC 14580 / DSM 13 / JCM 2505 / CCUG 7422 / NBRC 12200 / NCIMB 9375 / NCTC 10341 / NRRL NRS-1264 / Gibson 46)).